The following is a 308-amino-acid chain: MYPFVSNHPTTHTSYSTMPGFSGLDDKSCSSRYTDSVMNSYPPMGVPGSASIAQFYQQAAAVSAASAGVGVDSLGSACSQLSSSVGGAQSGLPDITRHPWLVTASQSALQKFASTDWMSNPFDRVVCGDFAGPNGCPRRRGRQTYTRFQTLELEKEFHFNHYLTRRRRIEIAHALCLTERQIKIWFQNRRMKLKKELRAVKEINEQARREREEQDKMKNESLKSAQQHHSQKQAQQEHTVVGSQQTSNGGGTGGGTGGSGGAGSGGSSGNLGSHLHHPSIVSQNDLKLGLGGMGVGVGGNLSMMGAQT.

A DNA-binding region (homeobox) is located at residues 138–197 (RRRGRQTYTRFQTLELEKEFHFNHYLTRRRRIEIAHALCLTERQIKIWFQNRRMKLKKEL). Residues 207–221 (ARREREEQDKMKNES) show a composition bias toward basic and acidic residues. A disordered region spans residues 207–277 (ARREREEQDK…SGNLGSHLHH (71 aa)). Positions 223 to 247 (KSAQQHHSQKQAQQEHTVVGSQQTS) are enriched in low complexity. Over residues 248-269 (NGGGTGGGTGGSGGAGSGGSSG) the composition is skewed to gly residues.

It belongs to the Antp homeobox family.

The protein resides in the nucleus. In terms of biological role, sequence-specific transcription factor which is part of a developmental regulatory system that provides cells with specific positional identities on the anterior-posterior axis. The sequence is that of Homeobox protein abdominal-A homolog from Anopheles gambiae (African malaria mosquito).